The sequence spans 155 residues: Regulatory protein RecX (155 aa).

Belongs to the RecX family.

The protein resides in the cytoplasm. In terms of biological role, modulates RecA activity. This is Regulatory protein RecX from Pseudomonas savastanoi pv. phaseolicola (strain 1448A / Race 6) (Pseudomonas syringae pv. phaseolicola (strain 1448A / Race 6)).